We begin with the raw amino-acid sequence, 265 residues long: uncharacterized protein (265 aa).

A divalent metal cation contacts are provided by His7, His9, Glu95, His131, His156, and Asp206.

Belongs to the metallo-dependent hydrolases superfamily. TatD-type hydrolase family. A divalent metal cation serves as cofactor.

This is an uncharacterized protein from Buchnera aphidicola subsp. Baizongia pistaciae (strain Bp).